The following is a 156-amino-acid chain: Small ribosomal subunit protein uS7 (156 aa).

This sequence belongs to the universal ribosomal protein uS7 family. In terms of assembly, part of the 30S ribosomal subunit. Contacts proteins S9 and S11.

One of the primary rRNA binding proteins, it binds directly to 16S rRNA where it nucleates assembly of the head domain of the 30S subunit. Is located at the subunit interface close to the decoding center, probably blocks exit of the E-site tRNA. The polypeptide is Small ribosomal subunit protein uS7 (Nostoc punctiforme (strain ATCC 29133 / PCC 73102)).